The following is a 292-amino-acid chain: 1,4-dihydroxy-2-naphthoate octaprenyltransferase (292 aa).

The next 6 membrane-spanning stretches (helical) occupy residues 35 to 55, 101 to 121, 137 to 157, 166 to 186, 220 to 240, and 271 to 291; these read AAVW…VIGV, ALAG…VGAI, GYAG…AVLG, VDWV…SVLV, LLAV…WCVV, and TGLA…FGQL.

Belongs to the MenA family. Type 1 subfamily. Mg(2+) is required as a cofactor.

The protein resides in the cell membrane. The enzyme catalyses an all-trans-polyprenyl diphosphate + 1,4-dihydroxy-2-naphthoate + H(+) = a 2-demethylmenaquinol + CO2 + diphosphate. It participates in quinol/quinone metabolism; menaquinone biosynthesis; menaquinol from 1,4-dihydroxy-2-naphthoate: step 1/2. With respect to regulation, activity is abolished by EDTA. Inhibited by Ro 48-8071, which is non-competitive with regard to DHNA and competitive with regard to the isoprenyldiphosphate substrate. Its function is as follows. Conversion of 1,4-dihydroxy-2-naphthoate (DHNA) to demethylmenaquinone (DMK). Can use a variety of allylic isoprenyl diphosphates as substrates but has a requirement for at least three isoprene units. The protein is 1,4-dihydroxy-2-naphthoate octaprenyltransferase of Mycobacterium tuberculosis (strain ATCC 25618 / H37Rv).